Consider the following 157-residue polypeptide: NAD(P)H-quinone oxidoreductase subunit N (157 aa).

This sequence belongs to the complex I NdhN subunit family. NDH-1 can be composed of about 15 different subunits; different subcomplexes with different compositions have been identified which probably have different functions.

It is found in the cellular thylakoid membrane. The catalysed reaction is a plastoquinone + NADH + (n+1) H(+)(in) = a plastoquinol + NAD(+) + n H(+)(out). It catalyses the reaction a plastoquinone + NADPH + (n+1) H(+)(in) = a plastoquinol + NADP(+) + n H(+)(out). Functionally, NDH-1 shuttles electrons from an unknown electron donor, via FMN and iron-sulfur (Fe-S) centers, to quinones in the respiratory and/or the photosynthetic chain. The immediate electron acceptor for the enzyme in this species is believed to be plastoquinone. Couples the redox reaction to proton translocation, and thus conserves the redox energy in a proton gradient. Cyanobacterial NDH-1 also plays a role in inorganic carbon-concentration. In Picosynechococcus sp. (strain ATCC 27264 / PCC 7002 / PR-6) (Agmenellum quadruplicatum), this protein is NAD(P)H-quinone oxidoreductase subunit N.